A 463-amino-acid chain; its full sequence is MISAISSPWLTQLSHFCDVAAFTANSLSSLNATGGYHLSPSPGDPYSQHEPHYEPCSASQHSYSFGHACPEPESGASSSSCASSTPGSGSTGSSSSNKAPVKKNPKVANINVQLEMKALWDEFNQLGTEMIVTKAGRRMFPTFQVKIFGMDPMADYMLLMDFVPVDDKRYRYAFHSSSWLVAGKADPATPGRVHYHPDSPAKGAQWMKQIVSFDKLKLTNNLLDDNGHIILNSMHRYQPRFHVVYVDPRKDSEKYAEENFKTFVFEETRFTAVTAYQNHRITQLKIASNPFAKGFRDCDPEDWPRNHRPGSLPLMNAFARSRNPVSSPTQNGSDKDGDGRREYERDASGTPLHGDAAHQQLMSRVLSLSLPVPGGLVPLSTGRPSPPHELRLDPHSQGSEPLHHHPYKYPTSYDRYLGAKTRPAPYPLPTIRGHGYHHHHMNPAAANMYSGAGAPGSYEYGPR.

Disordered regions lie at residues 39-58 (SPSPGDPYSQHEPHYEPCSA) and 75-104 (GASSSSCASSTPGSGSTGSSSSNKAPVKKN). Residues 75–96 (GASSSSCASSTPGSGSTGSSSS) are compositionally biased toward low complexity. A DNA-binding region (T-box) is located at residues 119–297 (LWDEFNQLGT…SNPFAKGFRD (179 aa)). Disordered regions lie at residues 320–354 (RSRNPVSSPTQNGSDKDGDGRREYERDASGTPLHG) and 377–409 (VPLSTGRPSPPHELRLDPHSQGSEPLHHHPYKY). A compositionally biased stretch (polar residues) spans 323–332 (NPVSSPTQNG). Basic and acidic residues predominate over residues 333-347 (SDKDGDGRREYERDA). Positions 420–431 (KTRPAPYPLPTI) match the Nuclear localization signal motif.

As to quaternary structure, binds DNA as a dimer. Interacts with dscr6/ripply3.

It is found in the nucleus. In terms of biological role, probable transcriptional regulator involved in developmental processes. Binds to the palindromic T site 5'-TTCACACCTAGGTGTGAA-3' DNA sequence. Induces pre-placodal ectoderm (PPE) gene expression in regions where RIPPLY3 is absent. Plays a role in the formation of the anteroposterior (AP) axis during embryonic development; required to establish the posterolateral border of the pre-placodal ectoderm (PPE) acting downstream of the retinoic acid receptor (RAR) signaling. This chain is T-box transcription factor TBX1-A (tbx1-a), found in Xenopus laevis (African clawed frog).